The chain runs to 537 residues: Glucose-6-phosphate isomerase (537 aa).

The active-site Proton donor is Glu-341. Active-site residues include His-372 and Lys-501.

It belongs to the GPI family.

It localises to the cytoplasm. It carries out the reaction alpha-D-glucose 6-phosphate = beta-D-fructose 6-phosphate. It functions in the pathway carbohydrate biosynthesis; gluconeogenesis. Its pathway is carbohydrate degradation; glycolysis; D-glyceraldehyde 3-phosphate and glycerone phosphate from D-glucose: step 2/4. Functionally, catalyzes the reversible isomerization of glucose-6-phosphate to fructose-6-phosphate. The sequence is that of Glucose-6-phosphate isomerase from Jannaschia sp. (strain CCS1).